The primary structure comprises 166 residues: Photosystem I assembly protein Ycf3 (166 aa).

3 TPR repeats span residues 35–68, 72–105, and 120–153; these read AFTY…EIDA, SYML…NPRL, and GEQA…SPTS.

It belongs to the Ycf3 family.

Its subcellular location is the plastid. It is found in the chloroplast thylakoid membrane. Functionally, essential for the assembly of the photosystem I (PSI) complex. May act as a chaperone-like factor to guide the assembly of the PSI subunits. This Bigelowiella natans (Pedinomonas minutissima) protein is Photosystem I assembly protein Ycf3.